Here is a 715-residue protein sequence, read N- to C-terminus: DNA-directed RNA polymerase subunit beta' (715 aa).

Residues Cys-69, Cys-71, Cys-87, and Cys-90 each coordinate Zn(2+). Positions 244–272 (APESQSEVIEAQGPVPQAEEEKQRDQSIQ) are disordered. Residues Asp-520, Asp-522, and Asp-524 each coordinate Mg(2+).

The protein belongs to the RNA polymerase beta' chain family. RpoC1 subfamily. As to quaternary structure, in plastids the minimal PEP RNA polymerase catalytic core is composed of four subunits: alpha, beta, beta', and beta''. When a (nuclear-encoded) sigma factor is associated with the core the holoenzyme is formed, which can initiate transcription. Requires Mg(2+) as cofactor. The cofactor is Zn(2+).

It localises to the plastid. The protein localises to the chloroplast. The catalysed reaction is RNA(n) + a ribonucleoside 5'-triphosphate = RNA(n+1) + diphosphate. Its function is as follows. DNA-dependent RNA polymerase catalyzes the transcription of DNA into RNA using the four ribonucleoside triphosphates as substrates. The protein is DNA-directed RNA polymerase subunit beta' of Zygnema circumcarinatum (Green alga).